The primary structure comprises 556 residues: Formate--tetrahydrofolate ligase (556 aa).

65–72 (TPAGEGKS) contacts ATP.

The protein belongs to the formate--tetrahydrofolate ligase family.

It carries out the reaction (6S)-5,6,7,8-tetrahydrofolate + formate + ATP = (6R)-10-formyltetrahydrofolate + ADP + phosphate. It participates in one-carbon metabolism; tetrahydrofolate interconversion. This is Formate--tetrahydrofolate ligase from Streptococcus suis (strain 98HAH33).